A 138-amino-acid polypeptide reads, in one-letter code: U1 small nuclear ribonucleoprotein C (138 aa).

A Matrin-type zinc finger spans residues 4–36 (YYCDYCDTFLTHDSPSVRKTHNNGRKHKENVRF). The segment at 58 to 138 (QSKPNSQMPP…MGRPPMSLRS (81 aa)) is disordered. Residues 67–109 (PNAPPGLMPPPGMLPPPGGMPPGRMPPQGLPFPPPGPIPPPPG) show a composition bias toward pro residues. The segment covering 113–138 (MRPPHGQMHMGGPRPQMGRPPMSLRS) has biased composition (low complexity).

It belongs to the U1 small nuclear ribonucleoprotein C family. U1 snRNP is composed of the 7 core Sm proteins B/B', D1, D2, D3, E, F and G that assemble in a heptameric protein ring on the Sm site of the small nuclear RNA to form the core snRNP, and at least 3 U1 snRNP-specific proteins U1-70K, U1-A and U1-C. U1-C interacts with U1 snRNA and the 5' splice-site region of the pre-mRNA.

It is found in the nucleus. Functionally, component of the spliceosomal U1 snRNP, which is essential for recognition of the pre-mRNA 5' splice-site and the subsequent assembly of the spliceosome. U1-C is directly involved in initial 5' splice-site recognition for both constitutive and regulated alternative splicing. The interaction with the 5' splice-site seems to precede base-pairing between the pre-mRNA and the U1 snRNA. Stimulates commitment or early (E) complex formation by stabilizing the base pairing of the 5' end of the U1 snRNA and the 5' splice-site region. The sequence is that of U1 small nuclear ribonucleoprotein C from Nematostella vectensis (Starlet sea anemone).